A 95-amino-acid chain; its full sequence is uncharacterized protein (95 aa).

Belongs to the inositol monophosphatase superfamily.

This is an uncharacterized protein from Rhizobium leguminosarum bv. phaseoli.